Reading from the N-terminus, the 423-residue chain is Kynureninase (423 aa).

Pyridoxal 5'-phosphate-binding positions include Leu105, Ser106, 133 to 136 (FPSD), Asp218, His221, and Tyr243. The residue at position 244 (Lys244) is an N6-(pyridoxal phosphate)lysine. Residues Trp273 and Asn301 each contribute to the pyridoxal 5'-phosphate site.

It belongs to the kynureninase family. Homodimer. Pyridoxal 5'-phosphate serves as cofactor.

It catalyses the reaction L-kynurenine + H2O = anthranilate + L-alanine + H(+). The catalysed reaction is 3-hydroxy-L-kynurenine + H2O = 3-hydroxyanthranilate + L-alanine + H(+). It participates in amino-acid degradation; L-kynurenine degradation; L-alanine and anthranilate from L-kynurenine: step 1/1. The protein operates within cofactor biosynthesis; NAD(+) biosynthesis; quinolinate from L-kynurenine: step 2/3. Functionally, catalyzes the cleavage of L-kynurenine (L-Kyn) and L-3-hydroxykynurenine (L-3OHKyn) into anthranilic acid (AA) and 3-hydroxyanthranilic acid (3-OHAA), respectively. This Xanthomonas oryzae pv. oryzae (strain PXO99A) protein is Kynureninase.